A 320-amino-acid chain; its full sequence is SUMO-activating enzyme subunit 1B-1 (320 aa).

Methionine 1 carries the N-acetylmethionine modification.

The protein belongs to the ubiquitin-activating E1 family. In terms of assembly, heterodimer of SAE1A or SAE1B and SAE2. The complex binds SUMO proteins via SAE2.

The protein resides in the nucleus. Its pathway is protein modification; protein sumoylation. Functionally, the dimeric enzyme acts as an E1 ligase for SUMO1 and SUMO2. It mediates ATP-dependent activation of SUMO proteins and formation of a thioester with a conserved cysteine residue on SAE2. Functionally redundant with its paralog SAE1A. This is SUMO-activating enzyme subunit 1B-1 (SAE1B-1) from Arabidopsis thaliana (Mouse-ear cress).